The primary structure comprises 37 residues: Large ribosomal subunit protein bL36c (37 aa).

Belongs to the bacterial ribosomal protein bL36 family.

The protein localises to the plastid. Its subcellular location is the chloroplast. In Dioscorea elephantipes (Elephant's foot yam), this protein is Large ribosomal subunit protein bL36c.